A 169-amino-acid chain; its full sequence is Probable actin-related protein 2/3 complex subunit 4 (169 aa).

Belongs to the ARPC4 family. In terms of assembly, component of the Arp2/3 complex, at least composed of arx-1, arx-2, arx-4 and arx-6.

It localises to the cytoplasm. It is found in the cytoskeleton. Functions as actin-binding component of the Arp2/3 complex which is involved in regulation of actin polymerization and together with an activating nucleation-promoting factor (NPF) mediates the formation of branched actin networks. Seems to contact the mother actin filament. Plays a role in time-dependent memory loss and the retention of conditioned behavior over time. The protein is Probable actin-related protein 2/3 complex subunit 4 of Caenorhabditis elegans.